An 85-amino-acid chain; its full sequence is Large ribosomal subunit protein bL27 (85 aa).

The interval 1–21 (MAHKKAGGSTRNGRDSNAQRL) is disordered. Polar residues predominate over residues 9-19 (STRNGRDSNAQ).

It belongs to the bacterial ribosomal protein bL27 family.

The protein is Large ribosomal subunit protein bL27 of Pectobacterium carotovorum subsp. carotovorum (strain PC1).